The chain runs to 482 residues: Glutamyl-tRNA(Gln) amidotransferase subunit A (482 aa).

Residues K74 and S149 each act as charge relay system in the active site. S173 (acyl-ester intermediate) is an active-site residue.

Belongs to the amidase family. GatA subfamily. In terms of assembly, heterotrimer of A, B and C subunits.

The catalysed reaction is L-glutamyl-tRNA(Gln) + L-glutamine + ATP + H2O = L-glutaminyl-tRNA(Gln) + L-glutamate + ADP + phosphate + H(+). Its function is as follows. Allows the formation of correctly charged Gln-tRNA(Gln) through the transamidation of misacylated Glu-tRNA(Gln) in organisms which lack glutaminyl-tRNA synthetase. The reaction takes place in the presence of glutamine and ATP through an activated gamma-phospho-Glu-tRNA(Gln). The sequence is that of Glutamyl-tRNA(Gln) amidotransferase subunit A from Prochlorococcus marinus (strain MIT 9215).